We begin with the raw amino-acid sequence, 145 residues long: Large ribosomal subunit protein uL16 (145 aa).

The protein belongs to the universal ribosomal protein uL16 family. In terms of assembly, part of the 50S ribosomal subunit.

In terms of biological role, binds 23S rRNA and is also seen to make contacts with the A and possibly P site tRNAs. The protein is Large ribosomal subunit protein uL16 of Herpetosiphon aurantiacus (strain ATCC 23779 / DSM 785 / 114-95).